Consider the following 456-residue polypeptide: UDP-N-acetylmuramate--L-alanine ligase (456 aa).

Glycine 112–threonine 118 provides a ligand contact to ATP.

This sequence belongs to the MurCDEF family.

Its subcellular location is the cytoplasm. It carries out the reaction UDP-N-acetyl-alpha-D-muramate + L-alanine + ATP = UDP-N-acetyl-alpha-D-muramoyl-L-alanine + ADP + phosphate + H(+). The protein operates within cell wall biogenesis; peptidoglycan biosynthesis. Its function is as follows. Cell wall formation. The chain is UDP-N-acetylmuramate--L-alanine ligase from Desulfatibacillum aliphaticivorans.